We begin with the raw amino-acid sequence, 233 residues long: MTFQPTPRQLSAIKAALFLLTLLPALHYAHGLWSDSLGANPIEALTRGMGIWTLNFLFLTLCVSPLRKLSGWHWLLRLRRMLGLTAFAYGCLHLLTYLWLDQFWDVDAIARDIWKRPFITVGATAFLLMLPLALTSSHAAIRSLGGKRWQSLHRAVYAVAILGVVHYLWLVKRVALLDPIIYALVLAILLGWRVVERIRLNGPWPTRSTPPAVQPVVFMKRDAVAALGEPKKR.

A run of 6 helical transmembrane segments spans residues Ile13–Trp33, Ala44–Ser64, Met81–Asp101, Pro117–Ser137, Ser151–Val171, and Val174–Val194. The 115-residue stretch at Gly50–Val164 folds into the Ferric oxidoreductase domain.

The protein belongs to the MsrQ family. In terms of assembly, heterodimer of a catalytic subunit (MsrP) and a heme-binding subunit (MsrQ).

It localises to the cell inner membrane. Part of the MsrPQ system that repairs oxidized periplasmic proteins containing methionine sulfoxide residues (Met-O), using respiratory chain electrons. Thus protects these proteins from oxidative-stress damage caused by reactive species of oxygen and chlorine generated by the host defense mechanisms. MsrPQ is essential for the maintenance of envelope integrity under bleach stress, rescuing a wide series of structurally unrelated periplasmic proteins from methionine oxidation. MsrQ provides electrons for reduction to the reductase catalytic subunit MsrP, using the quinone pool of the respiratory chain. Probably involved in protection against reactive chlorine species (RCS) generated by chlorite and hypochlorite. This chain is Protein-methionine-sulfoxide reductase heme-binding subunit MsrQ, found in Azospira oryzae (strain ATCC BAA-33 / DSM 13638 / PS) (Dechlorosoma suillum).